A 476-amino-acid polypeptide reads, in one-letter code: Monofunctional riboflavin biosynthesis protein RIBA 2, chloroplastic (476 aa).

A chloroplast-targeting transit peptide spans 1–54 (MASLTLRCDSTHLLPSRDVVKGTKPFGTSLVYPRIISKKFNVRMRVIPEEGDVF). The segment at 44–306 (MRVIPEEGDV…IADLIRYRRK (263 aa)) is DHBP synthase. Residues 130 to 131 (RE), Asp-135, 245 to 249 (RAGHT), and Glu-269 contribute to the D-ribulose 5-phosphate site. Glu-131 serves as a coordination point for Mg(2+). Position 248 (His-248) interacts with Mg(2+). Residues 307–476 (RERLVEFTAV…SGKVPLITTP (170 aa)) form an inactive GTP cyclohydrolase II region. Residues 357–361 (RVHAE), Gln-376, 399–401 (ESK), and Thr-450 contribute to the GTP site.

This sequence in the N-terminal section; belongs to the DHBP synthase family. The protein in the C-terminal section; belongs to the GTP cyclohydrolase II family. Requires Mg(2+) as cofactor. Mn(2+) serves as cofactor. As to expression, expressed in leaves, shoots, roots, flowers and siliques.

The protein localises to the plastid. It localises to the chloroplast. The catalysed reaction is D-ribulose 5-phosphate = (2S)-2-hydroxy-3-oxobutyl phosphate + formate + H(+). Its pathway is cofactor biosynthesis; riboflavin biosynthesis; 2-hydroxy-3-oxobutyl phosphate from D-ribulose 5-phosphate: step 1/1. Its function is as follows. Involved in riboflavin biosynthesis. Catalyzes the conversion of D-ribulose 5-phosphate to formate and 3,4-dihydroxy-2-butanone 4-phosphate. RIBA2 and RIBA3 together are not able to complement the loss of function of RIBA1. The sequence is that of Monofunctional riboflavin biosynthesis protein RIBA 2, chloroplastic (RIBA2) from Arabidopsis thaliana (Mouse-ear cress).